Here is a 215-residue protein sequence, read N- to C-terminus: BAG family molecular chaperone regulator 5, mitochondrial (215 aa).

The transit peptide at 1–14 directs the protein to the mitochondrion; sequence MKRSRKFSSSTTTT. The region spanning 50–79 is the IQ domain; that stretch reads ATAAAARIQSGYRSYRIRNLYKKISSINRE. The 78-residue stretch at 72-149 folds into the BAG domain; it reads KISSINREAN…GMQEILDSIS (78 aa).

Binds to the ATPase domain of HSP70/HSC70 chaperones. Interacts with HSP70-1.

The protein resides in the mitochondrion. In terms of biological role, co-chaperone that regulates diverse cellular pathways, such as programmed cell death and stress responses. This chain is BAG family molecular chaperone regulator 5, mitochondrial (BAG5), found in Arabidopsis thaliana (Mouse-ear cress).